The sequence spans 244 residues: ATP synthase subunit a, chloroplastic (244 aa).

The next 5 membrane-spanning stretches (helical) occupy residues 35 to 55 (QVLI…VIAV), 92 to 112 (VPFI…GALL), 131 to 151 (INTT…AGLS), 196 to 216 (LVVV…VMFL), and 217 to 237 (GLFI…AYIG).

The protein belongs to the ATPase A chain family. As to quaternary structure, F-type ATPases have 2 components, CF(1) - the catalytic core - and CF(0) - the membrane proton channel. CF(1) has five subunits: alpha(3), beta(3), gamma(1), delta(1), epsilon(1). CF(0) has four main subunits: a, b, b' and c.

The protein resides in the plastid. The protein localises to the chloroplast thylakoid membrane. Functionally, key component of the proton channel; it plays a direct role in the translocation of protons across the membrane. In Gossypium barbadense (Sea Island cotton), this protein is ATP synthase subunit a, chloroplastic.